A 131-amino-acid polypeptide reads, in one-letter code: UPF0102 protein YraN (131 aa).

Residues 1-19 (MATVPTRSGSPRQLTTKQT) show a composition bias toward polar residues. A disordered region spans residues 1-21 (MATVPTRSGSPRQLTTKQTGD).

This sequence belongs to the UPF0102 family.

The protein is UPF0102 protein YraN of Shigella flexneri serotype 5b (strain 8401).